We begin with the raw amino-acid sequence, 98 residues long: NADH-ubiquinone oxidoreductase chain 4L (98 aa).

Helical transmembrane passes span 1–21 (MSMV…GLLM), 29–49 (SLLC…MTIL), and 61–81 (IILL…LVMV).

This sequence belongs to the complex I subunit 4L family. As to quaternary structure, core subunit of respiratory chain NADH dehydrogenase (Complex I) which is composed of 45 different subunits.

It is found in the mitochondrion inner membrane. The enzyme catalyses a ubiquinone + NADH + 5 H(+)(in) = a ubiquinol + NAD(+) + 4 H(+)(out). Functionally, core subunit of the mitochondrial membrane respiratory chain NADH dehydrogenase (Complex I) which catalyzes electron transfer from NADH through the respiratory chain, using ubiquinone as an electron acceptor. Part of the enzyme membrane arm which is embedded in the lipid bilayer and involved in proton translocation. The protein is NADH-ubiquinone oxidoreductase chain 4L (MT-ND4L) of Phocarctos hookeri (Hooker's sea lion).